The following is a 425-amino-acid chain: Adenylosuccinate synthetase (425 aa).

Residues 12–18 and 40–42 contribute to the GTP site; these read GDEGKGK and GHT. Aspartate 13 serves as the catalytic Proton acceptor. 2 residues coordinate Mg(2+): aspartate 13 and glycine 40. IMP-binding positions include 13 to 16, 38 to 41, threonine 127, arginine 141, glutamine 222, threonine 237, and arginine 301; these read DEGK and NAGH. Residue histidine 41 is the Proton donor of the active site. 297-303 serves as a coordination point for substrate; that stretch reads AVTGRPR. Residues arginine 303, 329–331, and 411–413 each bind GTP; these read KID and SVG.

It belongs to the adenylosuccinate synthetase family. Homodimer. Mg(2+) is required as a cofactor.

Its subcellular location is the cytoplasm. It catalyses the reaction IMP + L-aspartate + GTP = N(6)-(1,2-dicarboxyethyl)-AMP + GDP + phosphate + 2 H(+). The protein operates within purine metabolism; AMP biosynthesis via de novo pathway; AMP from IMP: step 1/2. Functionally, plays an important role in the de novo pathway of purine nucleotide biosynthesis. Catalyzes the first committed step in the biosynthesis of AMP from IMP. This is Adenylosuccinate synthetase from Fusobacterium nucleatum.